A 94-amino-acid polypeptide reads, in one-letter code: Acylphosphatase (94 aa).

The region spanning 7–94 (AVQARVYGRV…TAPGDFRIVA (88 aa)) is the Acylphosphatase-like domain. Residues R22 and N40 contribute to the active site.

Belongs to the acylphosphatase family.

It catalyses the reaction an acyl phosphate + H2O = a carboxylate + phosphate + H(+). This chain is Acylphosphatase (acyP), found in Mesorhizobium japonicum (strain LMG 29417 / CECT 9101 / MAFF 303099) (Mesorhizobium loti (strain MAFF 303099)).